The primary structure comprises 161 residues: Nucleotide-binding protein Bcep1808_2648 (161 aa).

It belongs to the YajQ family.

Nucleotide-binding protein. This Burkholderia vietnamiensis (strain G4 / LMG 22486) (Burkholderia cepacia (strain R1808)) protein is Nucleotide-binding protein Bcep1808_2648.